Consider the following 46-residue polypeptide: uncharacterized protein (46 aa).

This is an uncharacterized protein from Escherichia coli (strain K12).